Consider the following 71-residue polypeptide: Large ribosomal subunit protein bL31 (71 aa).

Residues C16, C18, C37, and C40 each coordinate Zn(2+).

Belongs to the bacterial ribosomal protein bL31 family. Type A subfamily. Part of the 50S ribosomal subunit. Zn(2+) serves as cofactor.

Functionally, binds the 23S rRNA. This chain is Large ribosomal subunit protein bL31, found in Serratia proteamaculans (strain 568).